Reading from the N-terminus, the 65-residue chain is Large ribosomal subunit protein uL29 (65 aa).

It belongs to the universal ribosomal protein uL29 family.

The chain is Large ribosomal subunit protein uL29 from Hyphomonas neptunium (strain ATCC 15444).